The primary structure comprises 107 residues: Homeobox protein HD-7 (107 aa).

Residues 21–80 (KPGEKVRKSEFQKEVLKKVYQATPYPTWENKIDIGILISLSPRAVDIWFQNKRHINKGKN) constitute a DNA-binding region (homeobox).

It is found in the nucleus. The sequence is that of Homeobox protein HD-7 (HD-7) from Encephalitozoon cuniculi (strain GB-M1) (Microsporidian parasite).